The chain runs to 387 residues: MNSIKLPRTIHIGGKGQVKKLTLGGTSPILLQTMWKESLLGADLLSIVKSLNELEQLGCDIVRFAVPDMDSAEQFVKLTRLTEMPLVADIHFDYKLALRCMDGDTAKIRINPGNIGSKEKTEEVIRKAKDTGTAIRIGVNSGSLPSDLKKKIEEANSKRNLSGDKKALDDEISLLRADTLTEAAARELEIFEKADFKDAVVSMKASNVRETVMANEIFAKKFDNPLHLGVTEAGPLIQGIVKSTIAFYRLLEQNIGSTIRVSLSDSCENEVIAGREILTECGKRQGGIRLISCPRCGRKGFDVQAFVKRWQTKLLSEKKDISIAVMGCVVNGPGEGKHADLGITGAEDSVIIFKHGAITKRLDLKKLTEEEKIKAVDKAFIEELQSL.

Residues C293, C296, C328, and E335 each contribute to the [4Fe-4S] cluster site.

This sequence belongs to the IspG family. [4Fe-4S] cluster is required as a cofactor.

The enzyme catalyses (2E)-4-hydroxy-3-methylbut-2-enyl diphosphate + oxidized [flavodoxin] + H2O + 2 H(+) = 2-C-methyl-D-erythritol 2,4-cyclic diphosphate + reduced [flavodoxin]. Its pathway is isoprenoid biosynthesis; isopentenyl diphosphate biosynthesis via DXP pathway; isopentenyl diphosphate from 1-deoxy-D-xylulose 5-phosphate: step 5/6. Its function is as follows. Converts 2C-methyl-D-erythritol 2,4-cyclodiphosphate (ME-2,4cPP) into 1-hydroxy-2-methyl-2-(E)-butenyl 4-diphosphate. This chain is 4-hydroxy-3-methylbut-2-en-1-yl diphosphate synthase (flavodoxin), found in Treponema denticola (strain ATCC 35405 / DSM 14222 / CIP 103919 / JCM 8153 / KCTC 15104).